We begin with the raw amino-acid sequence, 475 residues long: MSALTTLFKYVDENQDRYVKKLAEWVAIQSVSAWPEKRGEIRRMMEVAAADIKQLGGSVQLVDIGTQKLPDGSEIPLPPILLGKLGSDPQKKTVCIYGHLDVQPAALEDGWDSEPFTLVERDGKLFGRGATDDKGPVAGWINALEAFQKTKQEVPVNVRFCLEGMEESGSEGLDALIFAQKDAFFKDVDYVCISDNYWLGKNKPCITYGLRGICYFFIEVECSDKDLHSGVYGGSVHEAMTDLIMLMGCLMDKKGKILIPGISEAVAPVTEEELELYDKIDFDLEEYARDVGAGTLLHGCKKDILMHRWRYPSLSLHGIEGAFSGSGAKTVIPRKVVGKFSIRLVPNMTPEVVSEQVTSYLTKKFAELHSPNKFKVYMGHGGKPWVSDFNHPHYLAGRRALKTVFGVEPDLTREGGSIPVTLTFQEATGKNVMLLPVGSADDGAHSQNEKLNRRNYIEGTKMLAAYLYEVSQLKD.

Lysine 9 carries the N6-acetyllysine modification. Position 58 is a phosphoserine (serine 58). A Mn(2+)-binding site is contributed by histidine 99. Aspartate 101 is a catalytic residue. Residue aspartate 132 participates in Mn(2+) binding. The active-site Proton acceptor is the glutamate 166. Substrate is bound by residues 166 to 167, aspartate 195, histidine 228, threonine 330, arginine 343, serine 417, and histidine 445; that span reads EE. Mn(2+)-binding residues include glutamate 167 and aspartate 195. Histidine 445 serves as a coordination point for Mn(2+).

It belongs to the peptidase M20A family. In terms of assembly, homodimer. Mn(2+) serves as cofactor.

Its subcellular location is the cytoplasm. The enzyme catalyses Hydrolysis of dipeptides, preferentially hydrophobic dipeptides including prolyl amino acids.. It catalyses the reaction L-threonyl-L-threonine + H2O = 2 L-threonine. It carries out the reaction L-threonyl-L-serine + H2O = L-threonine + L-serine. The catalysed reaction is L-seryl-L-threonine + H2O = L-threonine + L-serine. The enzyme catalyses L-cysteinylglycine + H2O = L-cysteine + glycine. It catalyses the reaction L-alanyl-L-cysteine + H2O = L-cysteine + L-alanine. It carries out the reaction (S)-lactate + L-phenylalanine = N-[(S)-lactoyl]-L-phenylalanine + H2O. Functionally, catalyzes the peptide bond hydrolysis in dipeptides, displaying a non-redundant activity toward threonyl dipeptides. Mediates threonyl dipeptide catabolism in a tissue-specific way. Has high dipeptidase activity toward cysteinylglycine, an intermediate metabolite in glutathione metabolism. Metabolizes N-lactoyl-amino acids, both through hydrolysis to form lactic acid and amino acids, as well as through their formation by reverse proteolysis. Plays a role in the regulation of cell cycle arrest and apoptosis. This Bos taurus (Bovine) protein is Cytosolic non-specific dipeptidase (CNDP2).